Consider the following 359-residue polypeptide: Photosystem II protein D1 1 (359 aa).

Helical transmembrane passes span 29–46, 118–133, and 142–156; these read YVGW…AATT, HFLI…EWEL, and WICV…AASA. Histidine 118 serves as a coordination point for chlorophyll a. Position 126 (tyrosine 126) interacts with pheophytin a. Residues aspartate 170 and glutamate 189 each contribute to the [CaMn4O5] cluster site. A helical transmembrane segment spans residues 197–218; that stretch reads FHMMGVAGVFGGSLFSAMHGSL. Chlorophyll a is bound at residue histidine 198. A quinone contacts are provided by residues histidine 215 and 264–265; that span reads SF. Position 215 (histidine 215) interacts with Fe cation. A Fe cation-binding site is contributed by histidine 272. The helical transmembrane segment at 274 to 288 threads the bilayer; the sequence is FLAAWPVVGIWFTAL. [CaMn4O5] cluster is bound by residues histidine 332, glutamate 333, aspartate 342, and alanine 344. The propeptide occupies 345–359; that stretch reads AAESTPVALQAPAIG.

It belongs to the reaction center PufL/M/PsbA/D family. As to quaternary structure, PSII is composed of 1 copy each of membrane proteins PsbA, PsbB, PsbC, PsbD, PsbE, PsbF, PsbH, PsbI, PsbJ, PsbK, PsbL, PsbM, PsbT, PsbX, PsbY, PsbZ, Psb30/Ycf12, peripheral proteins PsbO, CyanoQ (PsbQ), PsbU, PsbV and a large number of cofactors. It forms dimeric complexes. The D1/D2 heterodimer binds P680, chlorophylls that are the primary electron donor of PSII, and subsequent electron acceptors. It shares a non-heme iron and each subunit binds pheophytin, quinone, additional chlorophylls, carotenoids and lipids. D1 provides most of the ligands for the Mn4-Ca-O5 cluster of the oxygen-evolving complex (OEC). There is also a Cl(-1) ion associated with D1 and D2, which is required for oxygen evolution. The PSII complex binds additional chlorophylls, carotenoids and specific lipids. is required as a cofactor. Tyr-161 forms a radical intermediate that is referred to as redox-active TyrZ, YZ or Y-Z. In terms of processing, C-terminally processed by CtpA; processing is essential to allow assembly of the oxygen-evolving complex and thus photosynthetic growth.

Its subcellular location is the cellular thylakoid membrane. It carries out the reaction 2 a plastoquinone + 4 hnu + 2 H2O = 2 a plastoquinol + O2. Photosystem II (PSII) is a light-driven water:plastoquinone oxidoreductase that uses light energy to abstract electrons from H(2)O, generating O(2) and a proton gradient subsequently used for ATP formation. It consists of a core antenna complex that captures photons, and an electron transfer chain that converts photonic excitation into a charge separation. The D1/D2 (PsbA/PsbD) reaction center heterodimer binds P680, the primary electron donor of PSII as well as several subsequent electron acceptors. The polypeptide is Photosystem II protein D1 1 (Synechococcus sp. (strain WH7803)).